A 232-amino-acid chain; its full sequence is Orotate phosphoribosyltransferase (232 aa).

5-phospho-alpha-D-ribose 1-diphosphate contacts are provided by residues Arg107, Lys108, Lys111, His113, and 133–141; that span reads EDLTTAGGS. Thr137 provides a ligand contact to orotate.

Belongs to the purine/pyrimidine phosphoribosyltransferase family. PyrE subfamily. Homodimer. Mg(2+) is required as a cofactor.

The catalysed reaction is orotidine 5'-phosphate + diphosphate = orotate + 5-phospho-alpha-D-ribose 1-diphosphate. The protein operates within pyrimidine metabolism; UMP biosynthesis via de novo pathway; UMP from orotate: step 1/2. In terms of biological role, catalyzes the transfer of a ribosyl phosphate group from 5-phosphoribose 1-diphosphate to orotate, leading to the formation of orotidine monophosphate (OMP). The chain is Orotate phosphoribosyltransferase from Sinorhizobium fredii (strain NBRC 101917 / NGR234).